A 248-amino-acid polypeptide reads, in one-letter code: Mannose-binding protein C (248 aa).

A signal peptide spans 1-20 (MSLIPSLSLLLMSMVAASYS). Residues 42–99 (GINGFPGKDGRDGTKGEKGEPGQGLRGLQGPPGKLGPPGNPGPSGSPGPKGQKGDPGN) form the Collagen-like domain. The segment at 43-110 (INGFPGKDGR…PDCDSSLAVS (68 aa)) is disordered. Proline 47 is modified (4-hydroxyproline). Basic and acidic residues predominate over residues 49 to 61 (KDGRDGTKGEKGE). A 4-hydroxyproline mark is found at proline 73, proline 79, proline 82, and proline 88. Positions 75 to 87 (KLGPPGNPGPSGS) are enriched in pro residues. A coiled-coil region spans residues 112–130 (RKALQTEMARIKKWLTFSL). The region spanning 134 to 245 (VGNKFFLTNG…CSSSHLAVCE (112 aa)) is the C-type lectin domain. Disulfide bonds link cysteine 155–cysteine 244 and cysteine 222–cysteine 236.

As to quaternary structure, oligomeric complex of 3 or more homotrimers. Interacts with MASP1 and MASP2. Interacts with MEP1A and MEP1B and may inhibit their catalytic activity. Hydroxylation on proline residues within the sequence motif, GXPG, is most likely to be 4-hydroxy as this fits the requirement for 4-hydroxylation in vertebrates.

It is found in the secreted. Calcium-dependent lectin involved in innate immune defense. Binds mannose, fucose and N-acetylglucosamine on different microorganisms and activates the lectin complement pathway. Binds to late apoptotic cells, as well as to apoptotic blebs and to necrotic cells, but not to early apoptotic cells, facilitating their uptake by macrophages. The protein is Mannose-binding protein C (MBL2) of Nomascus concolor (Black crested gibbon).